Here is a 461-residue protein sequence, read N- to C-terminus: Photosystem II CP43 reaction center protein (461 aa).

Positions 1–2 are excised as a propeptide; it reads ME. Thr3 carries the N-acetylthreonine modification. Thr3 bears the Phosphothreonine mark. The next 5 helical transmembrane spans lie at 57–81, 122–143, 166–188, 243–263, and 279–300; these read LFEV…PHLA, LLGP…KDRN, KASY…RKIT, KPFA…LSYS, and WFNN…ASQA. Glu355 contributes to the [CaMn4O5] cluster binding site. A helical transmembrane segment spans residues 435-459; that stretch reads RARAAAAGFEKGIDRDFEPVLSMTP.

Belongs to the PsbB/PsbC family. PsbC subfamily. In terms of assembly, PSII is composed of 1 copy each of membrane proteins PsbA, PsbB, PsbC, PsbD, PsbE, PsbF, PsbH, PsbI, PsbJ, PsbK, PsbL, PsbM, PsbT, PsbX, PsbY, PsbZ, Psb30/Ycf12, at least 3 peripheral proteins of the oxygen-evolving complex and a large number of cofactors. It forms dimeric complexes. The cofactor is Binds multiple chlorophylls and provides some of the ligands for the Ca-4Mn-5O cluster of the oxygen-evolving complex. It may also provide a ligand for a Cl- that is required for oxygen evolution. PSII binds additional chlorophylls, carotenoids and specific lipids..

The protein resides in the plastid. It is found in the chloroplast thylakoid membrane. Functionally, one of the components of the core complex of photosystem II (PSII). It binds chlorophyll and helps catalyze the primary light-induced photochemical processes of PSII. PSII is a light-driven water:plastoquinone oxidoreductase, using light energy to abstract electrons from H(2)O, generating O(2) and a proton gradient subsequently used for ATP formation. The chain is Photosystem II CP43 reaction center protein from Lotus japonicus (Lotus corniculatus var. japonicus).